The primary structure comprises 471 residues: MSTDTRPTVRIRGIYSTALTKLFLDRGFGISQPSNKIVERFGLEKTYDDFDVDIYDKKDRHGVVLVGDAVEEAKKVLEEELIDVFFRRLPYQLYGIYKGLVVKIDEKYVYVDLGSAIGTIPRKDLPKAVEGDEILVQVKKHNLLPHLSTTLTIPGDYAVLIPKPIGAQRHVKISRKIRDNQERERLRILGLSIDLGKWGVLWRTAAAYKDWNLLRDEIVRLSKLADRLAKADTYFAPSLIIEGRNIYEVEFGGGAKRKLDEIRNKVVPTVDGHHQLKAKDPELGFAVEIAEGILSKVPGQRVKVNQGFWEALVENKGPKKGWLFTLEHVKPDGQRIRLGPGEVLEVSHNPLRVTIKRHLKPGKFYDGLELPIEFGDYAITELEAGKWWFVHRYYDKNGNLKGEYYNINTPVEIYPDGARYVDLEVDIVKWPDGKKEIIDQEELKEHYEEGIISEKLYRAVLRITQEVFERV.

The protein belongs to the FAU-1 family.

In terms of biological role, probable RNase involved in rRNA stability through maturation and/or degradation of precursor rRNAs. Preferentially cleaves UA sequences in the 5' precursor region of 5S rRNA. Binds to RNA in loop regions with AU-rich sequences. In Thermococcus kodakarensis (strain ATCC BAA-918 / JCM 12380 / KOD1) (Pyrococcus kodakaraensis (strain KOD1)), this protein is Probable ribonuclease FAU-1.